An 80-amino-acid chain; its full sequence is Acyl carrier protein (80 aa).

The Carrier domain maps to 2–77; the sequence is SDIEQRVKKI…QAIDYAKAHV (76 aa). The residue at position 37 (Ser-37) is an O-(pantetheine 4'-phosphoryl)serine.

It belongs to the acyl carrier protein (ACP) family. 4'-phosphopantetheine is transferred from CoA to a specific serine of apo-ACP by AcpS. This modification is essential for activity because fatty acids are bound in thioester linkage to the sulfhydryl of the prosthetic group.

It localises to the cytoplasm. Its pathway is lipid metabolism; fatty acid biosynthesis. Functionally, carrier of the growing fatty acid chain in fatty acid biosynthesis. In Herminiimonas arsenicoxydans, this protein is Acyl carrier protein.